The sequence spans 654 residues: Threonine--tRNA ligase (654 aa).

Residues 1–63 (MASINVKFPD…TTDGSIEIIA (63 aa)) enclose the TGS domain. Residues 248–546 (DHRVIGNELD…LTEIYKGAFP (299 aa)) are catalytic. Cysteine 342, histidine 393, and histidine 523 together coordinate Zn(2+).

This sequence belongs to the class-II aminoacyl-tRNA synthetase family. In terms of assembly, homodimer. Requires Zn(2+) as cofactor.

The protein resides in the cytoplasm. It carries out the reaction tRNA(Thr) + L-threonine + ATP = L-threonyl-tRNA(Thr) + AMP + diphosphate + H(+). In terms of biological role, catalyzes the attachment of threonine to tRNA(Thr) in a two-step reaction: L-threonine is first activated by ATP to form Thr-AMP and then transferred to the acceptor end of tRNA(Thr). Also edits incorrectly charged L-seryl-tRNA(Thr). This chain is Threonine--tRNA ligase, found in Lactiplantibacillus plantarum (strain ATCC BAA-793 / NCIMB 8826 / WCFS1) (Lactobacillus plantarum).